Here is a 426-residue protein sequence, read N- to C-terminus: Pyrophosphate--fructose 6-phosphate 1-phosphotransferase 2 (426 aa).

Gly15 provides a ligand contact to diphosphate. Mg(2+) is bound at residue Asp114. Residues 140 to 142 (TID), 186 to 188 (MGR), Glu247, and 308 to 311 (YELR) contribute to the substrate site. Asp142 (proton acceptor) is an active-site residue.

Belongs to the phosphofructokinase type A (PFKA) family. PPi-dependent PFK group II subfamily. Clade 'Short' sub-subfamily. As to quaternary structure, homotetramer. Mg(2+) is required as a cofactor.

It localises to the cytoplasm. The enzyme catalyses beta-D-fructose 6-phosphate + diphosphate = beta-D-fructose 1,6-bisphosphate + phosphate + H(+). Its pathway is carbohydrate degradation; glycolysis; D-glyceraldehyde 3-phosphate and glycerone phosphate from D-glucose: step 3/4. Its activity is regulated as follows. Non-allosteric. In terms of biological role, catalyzes the phosphorylation of D-fructose 6-phosphate, the first committing step of glycolysis. Uses inorganic phosphate (PPi) as phosphoryl donor instead of ATP like common ATP-dependent phosphofructokinases (ATP-PFKs), which renders the reaction reversible, and can thus function both in glycolysis and gluconeogenesis. Consistently, PPi-PFK can replace the enzymes of both the forward (ATP-PFK) and reverse (fructose-bisphosphatase (FBPase)) reactions. This is Pyrophosphate--fructose 6-phosphate 1-phosphotransferase 2 (pfk2) from Trichomonas vaginalis (strain ATCC PRA-98 / G3).